The sequence spans 452 residues: Tubulin alpha-1D chain (452 aa).

The MREC motif signature appears at methionine 1 to cysteine 4. Position 11 (glutamine 11) interacts with GTP. N6-acetyllysine is present on lysine 40. Residues glutamate 71, serine 140, glycine 144, threonine 145, threonine 179, asparagine 206, and asparagine 228 each coordinate GTP. Glutamate 71 is a Mg(2+) binding site. Glutamate 254 is an active-site residue. Tyrosine 282 carries the 3'-nitrotyrosine modification. The segment at tyrosine 432–tyrosine 452 is disordered. Serine 439 bears the Phosphoserine mark. Glutamate 446 is modified (5-glutamyl polyglutamate). At tyrosine 452 the chain carries 3'-nitrotyrosine.

The protein belongs to the tubulin family. Dimer of alpha and beta chains. A typical microtubule is a hollow water-filled tube with an outer diameter of 25 nm and an inner diameter of 15 nM. Alpha-beta heterodimers associate head-to-tail to form protofilaments running lengthwise along the microtubule wall with the beta-tubulin subunit facing the microtubule plus end conferring a structural polarity. Microtubules usually have 13 protofilaments but different protofilament numbers can be found in some organisms and specialized cells. The cofactor is Mg(2+). In terms of processing, some glutamate residues at the C-terminus are polyglycylated, resulting in polyglycine chains on the gamma-carboxyl group. Glycylation is mainly limited to tubulin incorporated into axonemes (cilia and flagella) whereas glutamylation is prevalent in neuronal cells, centrioles, axonemes, and the mitotic spindle. Both modifications can coexist on the same protein on adjacent residues, and lowering polyglycylation levels increases polyglutamylation, and reciprocally. Cilia and flagella glycylation is required for their stability and maintenance. Flagella glycylation controls sperm motility. Post-translationally, some glutamate residues at the C-terminus are polyglutamylated, resulting in polyglutamate chains on the gamma-carboxyl group. Polyglutamylation plays a key role in microtubule severing by spastin (SPAST). SPAST preferentially recognizes and acts on microtubules decorated with short polyglutamate tails: severing activity by SPAST increases as the number of glutamates per tubulin rises from one to eight, but decreases beyond this glutamylation threshold. Glutamylation is also involved in cilia motility. Acetylation of alpha chains at Lys-40 is located inside the microtubule lumen. This modification has been correlated with increased microtubule stability, intracellular transport and ciliary assembly. In terms of processing, methylation of alpha chains at Lys-40 is found in mitotic microtubules and is required for normal mitosis and cytokinesis contributing to genomic stability. Post-translationally, nitration of Tyr-452 is irreversible and interferes with normal dynein intracellular distribution. Undergoes a tyrosination/detyrosination cycle, the cyclic removal and re-addition of a C-terminal tyrosine residue by the enzymes tubulin tyrosine carboxypeptidase (MATCAP, VASH1 or VASH2) and tubulin tyrosine ligase (TTL), respectively. In terms of processing, tyrosination promotes microtubule interaction with CAP-Gly domain-containing proteins such as CLIP1, CLIP2 and DCTN1. Tyrosination regulates the initiation of dynein-dynactin motility via interaction with DCTN1, which brings the dynein-dynactin complex into contact with microtubules. In neurons, tyrosinated tubulins mediate the initiation of retrograde vesicle transport. Post-translationally, detyrosination is involved in metaphase plate congression by guiding chromosomes during mitosis: detyrosination promotes interaction with CENPE, promoting pole-proximal transport of chromosomes toward the equator. Detyrosination increases microtubules-dependent mechanotransduction in dystrophic cardiac and skeletal muscle. In cardiomyocytes, detyrosinated microtubules are required to resist to contractile compression during contraction: detyrosination promotes association with desmin (DES) at force-generating sarcomeres, leading to buckled microtubules and mechanical resistance to contraction.

The protein resides in the cytoplasm. It is found in the cytoskeleton. The catalysed reaction is GTP + H2O = GDP + phosphate + H(+). Functionally, tubulin is the major constituent of microtubules, a cylinder consisting of laterally associated linear protofilaments composed of alpha- and beta-tubulin heterodimers. Microtubules grow by the addition of GTP-tubulin dimers to the microtubule end, where a stabilizing cap forms. Below the cap, tubulin dimers are in GDP-bound state, owing to GTPase activity of alpha-tubulin. The protein is Tubulin alpha-1D chain (TUBA1D) of Bos taurus (Bovine).